A 281-amino-acid polypeptide reads, in one-letter code: CCAAT/enhancer-binding protein epsilon (281 aa).

Residues 1 to 30 (MSHGTYYECEPRGGQQPLEFSGGRAGPGEL) form a disordered region. Lysine 121 is covalently cross-linked (Glycyl lysine isopeptide (Lys-Gly) (interchain with G-Cter in SUMO2)). Position 181 is a phosphoserine (serine 181). The region spanning 204–267 (SLEYRLRRER…DTLRNLFRQI (64 aa)) is the bZIP domain. The interval 208-245 (RLRRERNNIAVRKSRDKAKRRIMETQQKVLEYMAENER) is basic motif. Residues 246–267 (LRSRVDQLTQELDTLRNLFRQI) are leucine-zipper.

It belongs to the bZIP family. C/EBP subfamily. Binds DNA as a homodimer and as a heterodimer. Can form stable heterodimers with CEBPA, CEBPB and CEBPD. Interacts with GATA1 and SPI1. Interacts with SMARCD2.

It localises to the nucleus. Transcriptional activator. C/EBP are DNA-binding proteins that recognize two different motifs: the CCAAT homology common to many promoters and the enhanced core homology common to many enhancers. Required for the promyelocyte-myelocyte transition in myeloid differentiation. In Rattus norvegicus (Rat), this protein is CCAAT/enhancer-binding protein epsilon (Cebpe).